A 410-amino-acid chain; its full sequence is MLKGEKVVLAYSGGLDTSVIIPWLKENYECEIIAACINVGQGEELKYIKDKALASGASKVYIEDVKEEFVKDYIFPTLKAGAVYEGKYLLGTSMARPLIAKKLVEIAHKEGAKAIAHGATGKGNDQVRFEVSIHALDPSIKIIAPWRIWDLKSREDEIDYAKKKGIPIPVTKEKIYSVDNNLWHVSHEGGDLEDPWNEPKSDLYDIITPPDKAPDKPEYVLIEFEKGIPVKVNGKALEPVKLIEELNAIAGRNGVGIADLVENRLVGMKSRGVYETPAGTLLYAAHKELEYLVLDKETMRFKDLVSQKYADLVYNGLWFSPLKAALDAFVEETQKNVTGVVRLKLYKGNVINAGVKSPYSLYNQEFVTFGKDEVYNQKDAEGFINLFGLSLKIKALMEMERKDMDEAVGR.

10-18 (AYSGGLDTS) is an ATP binding site. Positions 88 and 93 each coordinate L-citrulline. G118 provides a ligand contact to ATP. Positions 120, 124, and 125 each coordinate L-aspartate. L-citrulline is bound at residue N124. L-citrulline-binding residues include R128, S177, S186, E262, and Y274.

The protein belongs to the argininosuccinate synthase family. Type 1 subfamily. In terms of assembly, homotetramer.

Its subcellular location is the cytoplasm. It carries out the reaction L-citrulline + L-aspartate + ATP = 2-(N(omega)-L-arginino)succinate + AMP + diphosphate + H(+). The protein operates within amino-acid biosynthesis; L-arginine biosynthesis; L-arginine from L-ornithine and carbamoyl phosphate: step 2/3. This chain is Argininosuccinate synthase, found in Thermoanaerobacter sp. (strain X514).